A 369-amino-acid chain; its full sequence is DNA polymerase IV 2 (369 aa).

The UmuC domain occupies 17–201; sequence VFHVDMDSFF…LPVSRIPGVG (185 aa). Residues Asp21 and Asp119 each contribute to the Mg(2+) site. Residue Glu120 is part of the active site.

Belongs to the DNA polymerase type-Y family. Monomer. Requires Mg(2+) as cofactor.

Its subcellular location is the cytoplasm. It catalyses the reaction DNA(n) + a 2'-deoxyribonucleoside 5'-triphosphate = DNA(n+1) + diphosphate. In terms of biological role, poorly processive, error-prone DNA polymerase involved in untargeted mutagenesis. Copies undamaged DNA at stalled replication forks, which arise in vivo from mismatched or misaligned primer ends. These misaligned primers can be extended by PolIV. Exhibits no 3'-5' exonuclease (proofreading) activity. May be involved in translesional synthesis. The chain is DNA polymerase IV 2 (dbh2) from Methanosarcina mazei (strain ATCC BAA-159 / DSM 3647 / Goe1 / Go1 / JCM 11833 / OCM 88) (Methanosarcina frisia).